Here is a 477-residue protein sequence, read N- to C-terminus: tRNA(Ile)-lysidine synthase (477 aa).

Ser36 to Ser41 is a binding site for ATP.

The protein belongs to the tRNA(Ile)-lysidine synthase family.

The protein resides in the cytoplasm. The enzyme catalyses cytidine(34) in tRNA(Ile2) + L-lysine + ATP = lysidine(34) in tRNA(Ile2) + AMP + diphosphate + H(+). Its function is as follows. Ligates lysine onto the cytidine present at position 34 of the AUA codon-specific tRNA(Ile) that contains the anticodon CAU, in an ATP-dependent manner. Cytidine is converted to lysidine, thus changing the amino acid specificity of the tRNA from methionine to isoleucine. This Treponema pallidum (strain Nichols) protein is tRNA(Ile)-lysidine synthase.